Reading from the N-terminus, the 90-residue chain is Probable Fe(2+)-trafficking protein (90 aa).

Belongs to the Fe(2+)-trafficking protein family.

In terms of biological role, could be a mediator in iron transactions between iron acquisition and iron-requiring processes, such as synthesis and/or repair of Fe-S clusters in biosynthetic enzymes. The sequence is that of Probable Fe(2+)-trafficking protein from Haemophilus influenzae (strain 86-028NP).